Consider the following 110-residue polypeptide: Protein RnfH (110 aa).

Residues 86–110 are disordered; sequence RQRRVEKTRKAGSIEGRRWQNKDSR. A compositionally biased stretch (basic and acidic residues) spans 100-110; sequence EGRRWQNKDSR.

The protein belongs to the UPF0125 (RnfH) family.

The sequence is that of Protein RnfH from Paraburkholderia xenovorans (strain LB400).